We begin with the raw amino-acid sequence, 228 residues long: Transmembrane protein 186 (228 aa).

Residues 1 to 93 (MDMMMMSTRL…RGLRALSRLK (93 aa)) lie on the Mitochondrial matrix side of the membrane. The helical transmembrane segment at 94–112 (LLQTGITVVLLPTVYYLHL) threads the bilayer. The Mitochondrial intermembrane portion of the chain corresponds to 113-118 (QGQASV). The chain crosses the membrane as a helical span at residues 119–141 (LVLNRSIGIALFAGVMLYSISHF). Over 142–228 (VRRVVGMMYL…AFGKVFGSLS (87 aa)) the chain is Mitochondrial matrix.

The protein belongs to the TMEM186 family.

The protein resides in the mitochondrion inner membrane. Its function is as follows. May be required for efficient assembly of the mitochondrial complex I. This Danio rerio (Zebrafish) protein is Transmembrane protein 186.